Here is a 366-residue protein sequence, read N- to C-terminus: 3-isopropylmalate dehydrogenase (366 aa).

78 to 91 lines the NAD(+) pocket; sequence GPQWTHLKGSESPE. Substrate is bound by residues arginine 99, arginine 109, arginine 138, and aspartate 227. Residues aspartate 227, aspartate 251, and aspartate 255 each coordinate Mg(2+). NAD(+) is bound at residue 285-297; sequence GSAPDIAEKNIAN.

This sequence belongs to the isocitrate and isopropylmalate dehydrogenases family. LeuB type 1 subfamily. As to quaternary structure, homodimer. Mg(2+) is required as a cofactor. Requires Mn(2+) as cofactor.

The protein resides in the cytoplasm. It catalyses the reaction (2R,3S)-3-isopropylmalate + NAD(+) = 4-methyl-2-oxopentanoate + CO2 + NADH. The protein operates within amino-acid biosynthesis; L-leucine biosynthesis; L-leucine from 3-methyl-2-oxobutanoate: step 3/4. Its function is as follows. Catalyzes the oxidation of 3-carboxy-2-hydroxy-4-methylpentanoate (3-isopropylmalate) to 3-carboxy-4-methyl-2-oxopentanoate. The product decarboxylates to 4-methyl-2 oxopentanoate. The polypeptide is 3-isopropylmalate dehydrogenase (Blochmanniella pennsylvanica (strain BPEN)).